A 264-amino-acid polypeptide reads, in one-letter code: S-adenosylmethionine decarboxylase proenzyme (264 aa).

The active-site Schiff-base intermediate with substrate; via pyruvic acid is Ser-112. Ser-112 bears the Pyruvic acid (Ser); by autocatalysis mark. The Proton acceptor; for processing activity role is filled by His-117. Cys-140 functions as the Proton donor; for catalytic activity in the catalytic mechanism.

This sequence belongs to the prokaryotic AdoMetDC family. Type 2 subfamily. Heterooctamer of four alpha and four beta chains arranged as a tetramer of alpha/beta heterodimers. Requires pyruvate as cofactor. In terms of processing, is synthesized initially as an inactive proenzyme. Formation of the active enzyme involves a self-maturation process in which the active site pyruvoyl group is generated from an internal serine residue via an autocatalytic post-translational modification. Two non-identical subunits are generated from the proenzyme in this reaction, and the pyruvate is formed at the N-terminus of the alpha chain, which is derived from the carboxyl end of the proenzyme. The post-translation cleavage follows an unusual pathway, termed non-hydrolytic serinolysis, in which the side chain hydroxyl group of the serine supplies its oxygen atom to form the C-terminus of the beta chain, while the remainder of the serine residue undergoes an oxidative deamination to produce ammonia and the pyruvoyl group blocking the N-terminus of the alpha chain.

The enzyme catalyses S-adenosyl-L-methionine + H(+) = S-adenosyl 3-(methylsulfanyl)propylamine + CO2. It functions in the pathway amine and polyamine biosynthesis; S-adenosylmethioninamine biosynthesis; S-adenosylmethioninamine from S-adenosyl-L-methionine: step 1/1. In terms of biological role, catalyzes the decarboxylation of S-adenosylmethionine to S-adenosylmethioninamine (dcAdoMet), the propylamine donor required for the synthesis of the polyamines spermine and spermidine from the diamine putrescine. In Escherichia coli O45:K1 (strain S88 / ExPEC), this protein is S-adenosylmethionine decarboxylase proenzyme.